The sequence spans 109 residues: FK506-binding protein (109 aa).

Positions 20 to 108 (GKEITVHYTG…IFEVELLKVY (89 aa)) constitute a PPIase FKBP-type domain.

It belongs to the FKBP-type PPIase family.

It carries out the reaction [protein]-peptidylproline (omega=180) = [protein]-peptidylproline (omega=0). Its function is as follows. PPIases accelerate the folding of proteins. This is FK506-binding protein (fbp) from Neisseria meningitidis serogroup C.